The following is a 711-amino-acid chain: Protein mono-ADP-ribosyltransferase PARP12 (711 aa).

3 consecutive C3H1-type zinc fingers follow at residues 103–128 (LCKF…HNLK), 164–188 (ICLH…IKLH), and 189–211 (ICQY…HEFT). Residues 247–279 (SALSKVSPSPAGPQGSSERKDSSGPVSPGTPSQ) form a disordered region. A Phosphoserine modification is found at S268. C3H1-type zinc fingers lie at residues 280-307 (EESE…HFHL) and 281-306 (ESEQ…VHFH). WWE domains lie at 308–371 (PYRW…RLST) and 374–468 (SVTK…KVCR). ADP-ribosylcysteine is present on C484. The region spanning 494–708 (IPDYWDPAAL…IFVALGNLFT (215 aa)) is the PARP catalytic domain. An ADP-ribosyl aspartic acid mark is found at D610 and D621.

The protein belongs to the ARTD/PARP family. In terms of assembly, interacts with PARP11; this interaction plays a key role in zika virus suppression. Interacts with ISG15. In terms of processing, auto-mono-ADP-ribosylated. Phosphorylated by PRKD1.

The protein localises to the nucleus. It localises to the golgi apparatus. It is found in the trans-Golgi network. Its subcellular location is the cytoplasm. The protein resides in the stress granule. It catalyses the reaction L-aspartyl-[protein] + NAD(+) = 4-O-(ADP-D-ribosyl)-L-aspartyl-[protein] + nicotinamide. The enzyme catalyses L-cysteinyl-[protein] + NAD(+) = S-(ADP-D-ribosyl)-L-cysteinyl-[protein] + nicotinamide + H(+). Mono-ADP-ribosyltransferase that mediates mono-ADP-ribosylation of target proteins. Displays anti-alphavirus activity during IFN-gamma immune activation by directly ADP-ribosylating the alphaviral non-structural proteins nsP3 and nsP4. Acts as a component of the PRKD1-driven regulatory cascade that selectively controls a major branch of the basolateral transport pathway by catalyzing the MARylation of GOLGA1. Acts also as a key regulator of mitochondrial function, protein translation, and inflammation. Inhibits PINK1/Parkin-dependent mitophagy and promotes cartilage degeneration by inhibiting the ubiquitination and SUMOylation of MFN1/2 by upregulating ISG15 and ISGylation. The sequence is that of Protein mono-ADP-ribosyltransferase PARP12 from Mus musculus (Mouse).